Reading from the N-terminus, the 162-residue chain is MDETTKSSLKAIPLCKTKAGPRDGDLWMERLKAKYEAIIAAVQNNKTSDRDWFKLEANERGTKWFGKCWYFHNMVKYEFDVEFDIPITYPVTAPEIALPELDGKTAKMYRGGKICLSEHFKPLWARNTPKFGIAHAFALGLGPWMAVEIPDLIEKGIIQPKA.

Catalysis depends on cysteine 115, which acts as the Glycyl thioester intermediate.

Belongs to the ubiquitin-conjugating enzyme family. UFC1 subfamily. In terms of assembly, interacts with uba-5.

Functionally, E2-like enzyme which forms an intermediate with ufm-1. The intermediate is formed via a thioester linkage. In Caenorhabditis briggsae, this protein is Ubiquitin-fold modifier-conjugating enzyme 1.